We begin with the raw amino-acid sequence, 409 residues long: Elongation factor Tu (409 aa).

The tr-type G domain occupies 10-214 (KPHVNIGTIG…AVDDNIPEPE (205 aa)). Residues 19–26 (GHVDHGKT) are G1. 19-26 (GHVDHGKT) provides a ligand contact to GTP. Threonine 26 contacts Mg(2+). The interval 60-64 (GITIN) is G2. Residues 81-84 (DCPG) form a G3 region. Residues 81 to 85 (DCPGH) and 136 to 139 (NKKD) each bind GTP. The G4 stretch occupies residues 136 to 139 (NKKD). Positions 174–176 (SAL) are G5.

Belongs to the TRAFAC class translation factor GTPase superfamily. Classic translation factor GTPase family. EF-Tu/EF-1A subfamily. As to quaternary structure, monomer.

It is found in the cytoplasm. It catalyses the reaction GTP + H2O = GDP + phosphate + H(+). GTP hydrolase that promotes the GTP-dependent binding of aminoacyl-tRNA to the A-site of ribosomes during protein biosynthesis. The protein is Elongation factor Tu of Crocosphaera subtropica (strain ATCC 51142 / BH68) (Cyanothece sp. (strain ATCC 51142)).